Reading from the N-terminus, the 433-residue chain is Serine carboxypeptidase-like 11 (433 aa).

A signal peptide spans 1–21; the sequence is MELTLKLLVLLLFILNHHVGS. 3 disulfide bridges follow: cysteine 80–cysteine 322, cysteine 243–cysteine 257, and cysteine 281–cysteine 288. N-linked (GlcNAc...) asparagine glycosylation is present at asparagine 101. Residue serine 176 is part of the active site. An N-linked (GlcNAc...) asparagine glycan is attached at asparagine 342. The active site involves aspartate 358. A glycan (N-linked (GlcNAc...) asparagine) is linked at asparagine 374. Histidine 411 is an active-site residue.

Belongs to the peptidase S10 family. Ubiquitous.

It localises to the secreted. Functionally, probable carboxypeptidase. This Arabidopsis thaliana (Mouse-ear cress) protein is Serine carboxypeptidase-like 11 (SCPL11).